The sequence spans 115 residues: MLSQTIKSGDWKGEKHVPVIEYEKEGDLVKVEVSVGKEIPHPNTPEHHIAWIQLWFHPEDGAFPILVGKVEFSNHTDPLTEPRAVFFFRTQKKGKLYALSYCNIHGLWENEVTLE.

Fe cation contacts are provided by glutamate 14, histidine 16, histidine 41, histidine 47, cysteine 102, and histidine 105.

This sequence belongs to the desulfoferrodoxin family. Homotetramer. Fe cation is required as a cofactor.

It carries out the reaction reduced [rubredoxin] + superoxide + 2 H(+) = oxidized [rubredoxin] + H2O2. Uses electrons from reduced NADP, by way of rubredoxin and an oxidoreductase, to catalyze the reduction of superoxide to hydrogen peroxide. The chain is Superoxide reductase (sorA) from Thermococcus kodakarensis (strain ATCC BAA-918 / JCM 12380 / KOD1) (Pyrococcus kodakaraensis (strain KOD1)).